The chain runs to 348 residues: Small ribosomal subunit biogenesis GTPase RsgA (348 aa).

Residues 72-230 (RNQLSRPAIA…IADTPGFNQP (159 aa)) enclose the CP-type G domain. GTP contacts are provided by residues 121 to 124 (TKAD) and 172 to 180 (GPSGVGKSS). Positions 255, 260, 262, and 268 each coordinate Zn(2+). The segment covering 305 to 322 (AKSDRQGQQRLEPLLDAK) has biased composition (basic and acidic residues). The segment at 305–348 (AKSDRQGQQRLEPLLDAKKYRRRSRRQQHQHVNPMAEEVLDSEW) is disordered. Residues 323 to 333 (KYRRRSRRQQH) show a composition bias toward basic residues.

The protein belongs to the TRAFAC class YlqF/YawG GTPase family. RsgA subfamily. As to quaternary structure, monomer. Associates with 30S ribosomal subunit, binds 16S rRNA. The cofactor is Zn(2+).

The protein localises to the cytoplasm. Its function is as follows. One of several proteins that assist in the late maturation steps of the functional core of the 30S ribosomal subunit. Helps release RbfA from mature subunits. May play a role in the assembly of ribosomal proteins into the subunit. Circularly permuted GTPase that catalyzes slow GTP hydrolysis, GTPase activity is stimulated by the 30S ribosomal subunit. The protein is Small ribosomal subunit biogenesis GTPase RsgA of Thermosynechococcus vestitus (strain NIES-2133 / IAM M-273 / BP-1).